A 394-amino-acid polypeptide reads, in one-letter code: Ceramide synthase 4 (394 aa).

The Lumenal segment spans residues 1–31 (MLSSFNEWFWQDRFWLPPNVTWTELEDRDGR). N-linked (GlcNAc...) asparagine glycosylation is present at N19. Residues 32–52 (VYPHPQDLLAALPLALVLLAM) form a helical membrane-spanning segment. Residues 67–128 (WLGVRDQTRR…RRRRNQDRPQ (62 aa)) form a homeobox-like region. The 202-residue stretch at 131-332 (KKFCEASWRF…ILRMLYSFMK (202 aa)) folds into the TLC domain. The next 4 helical transmembrane spans lie at 140-160 (FLFYLSSFVGGLSVLYHESWL), 179-199 (LYWWYLLELGFYLSLLIRLPF), 209-229 (QVIHHFVAVILMTFSYSANLL), and 260-280 (VCDALFLIFSFVFFYTRLVLF). Positions 291-301 (ESISNRGPFFG) match the Last loop motif motif. The chain crosses the membrane as a helical span at residues 304–324 (FFNGLLMLLQLLHVFWSCLIL). At 325-394 (RMLYSFMKKG…RLTNRHTTAT (70 aa)) the chain is on the cytoplasmic side. The interval 341 to 394 (RSDVEESDSSEEAAAAQEPLQLKNGAAGGPRPAPTDGPRSRVAGRLTNRHTTAT) is disordered. Phosphoserine is present on residues S342, S349, and S350.

Post-translationally, phosphorylated at the C-terminus by CK2. N-glycosylated.

The protein localises to the endoplasmic reticulum membrane. The catalysed reaction is sphinganine + octadecanoyl-CoA = N-(octadecanoyl)-sphinganine + CoA + H(+). It carries out the reaction eicosanoyl-CoA + sphinganine = N-eicosanoylsphinganine + CoA + H(+). It catalyses the reaction docosanoyl-CoA + sphinganine = N-docosanoylsphinganine + CoA + H(+). The enzyme catalyses tetracosanoyl-CoA + sphinganine = N-tetracosanoylsphinganine + CoA + H(+). The catalysed reaction is hexacosanoyl-CoA + sphinganine = N-hexacosanoylsphinganine + CoA + H(+). It carries out the reaction a fatty acyl-CoA + sphing-4-enine = an N-acylsphing-4-enine + CoA + H(+). It catalyses the reaction sphing-4-enine + octadecanoyl-CoA = N-octadecanoylsphing-4-enine + CoA + H(+). The enzyme catalyses hexadecasphinganine + octadecanoyl-CoA = N-octadecanoylhexadecasphinganine + CoA + H(+). The protein operates within lipid metabolism; sphingolipid metabolism. Functionally, ceramide synthase that catalyzes formation of ceramide from sphinganine and acyl-CoA substrates, with high selectivity toward long and very-long chains (C18:0-C22:0) as acyl donor. This chain is Ceramide synthase 4, found in Homo sapiens (Human).